We begin with the raw amino-acid sequence, 92 residues long: Large ribosomal subunit protein eL43 (92 aa).

Zn(2+) is bound by residues cysteine 39, cysteine 42, cysteine 57, and cysteine 60. A C4-type zinc finger spans residues 39–60; it reads CPVCGFPKLKRASTSIWVCGKC.

This sequence belongs to the eukaryotic ribosomal protein eL43 family. Putative zinc-binding subfamily. As to quaternary structure, part of the 50S ribosomal subunit. The cofactor is Zn(2+).

Its function is as follows. Binds to the 23S rRNA. This chain is Large ribosomal subunit protein eL43, found in Methanocaldococcus jannaschii (strain ATCC 43067 / DSM 2661 / JAL-1 / JCM 10045 / NBRC 100440) (Methanococcus jannaschii).